Consider the following 1086-residue polypeptide: MFRIFFTLLIIILIKKTSAIDLIEGIFYEKNEIDKLTFSLDHRVRDNLKTDLILNNNGENDYAYLNKYVYTILNRDSTEKIKTFFSHNKDMKSCDYFISKEYNSSDKTNQICYKKTFCGVVIPNSEEIKTNKITNDKLYCAHFNSTHIIIYYISQPLLLEPHVVYEETFFEKGKNDQINCQGMYISLRSVHVHTHNAILQQETLTYIKNLCDGKNNCKFDFDSIKYENKSLTHYLFFINIQYQCISPLNLQENEMCDVYNDDTHKATCKYGFNKIELLKNVCEENYRCTQDICSVNQFCDGENETCTCKTSLLPSAKNNCEYNDLCTVLNCPENSTCEQIGNGKKAECKCENGKYYHNNKCYTKNDLELAIKIEPHKKEKFYKNNLYQGKALKPEYIFMQCENGFSIEVINAYVSCYRVSFNLNKLKYVTESLKKMCDGKTKCAYGNTIDPIDDLNHHNICNNFNTIFKYDYLCVFNNQNITSDKNSHLHSNIPSLYNSSILPDINKSKFHLISRNSRTNQYPHNNISMLEIQNEISSHNSNQFSTDPHTNSNNINNMNIKKVEIFRSRFSSKLQCQGGKINIDKAILKGGEGCNDLLLTNSLKSYCNDLSECDIGLIYHFDTYCINDQYLFVSYSCSNLCNKCHNNSTCYGNRFNYDCFCDNPYISKYGNKLCERPNDCESVLCSQNQVCQILPNDKLICQCEEGYKNVKGKCVPDNKCDLSCPSNKVCVIENGKQTCKCSERFVLENGVCICANDYKMEDGINCIAKNKCKRKEYENICTNPNEMCAYNEETDIVKCECKEHYYRSSRGECILNDYCKDINCKENEECSIVNFKPECVCKENLKKNNKGECIYENSCLINEGNCPKDSKCIYREYKPHECVCNKQGHVAVNGKCVLEDKCVHNKKCSENSICVNVMNKEPICVCTYNYYKKDGVCLIQNPCLKDNGGCSRNSECTFKYSKINCTCKENYKNKDDSCVPNTNEYDESFTFQYNDDASIILGACGMIEFSYIYNQIIWKINNSKESYVFYYDYPTAGNIEVQIKNEIFHTIIYLKKKIGNSVIYDDFQVDHQTCIYENVFYYSNQN.

The N-terminal stretch at 1-19 is a signal peptide; that stretch reads MFRIFFTLLIIILIKKTSA. 10 N-linked (GlcNAc...) asparagine glycosylation sites follow: N103, N144, N228, N303, N334, N480, N498, N506, N526, and N646. 2 EGF-like domains span residues 287–321 and 325–362; these read RCTQ…NNCE and LCTV…NKCY. EGF-like domains lie at 636–675, 679–715, 719–753, 818–854, 858–897, 901–938, and 942–979; these read SCSN…KLCE, DCES…GKCV, KCDL…GVCI, YCKD…GECI, SCLI…GKCV, KCVH…GVCL, and PCLK…DSCV. N-linked (GlcNAc...) asparagine glycans are attached at residues N964 and N1021.

Component of the PfRH5 adhesion complex composed of 1 copy of CyRPA, RH5 and RIPR; the complex is formed during merozoite invasion of host erythrocytes specifically at the interface between the parasite and host membranes. Within the complex, interacts with CyRPA. CyRPA recruitment of RIPR to RH5-P113-BSG leads to the formation of the PfRH5 adhesion complex which probably in turn releases RH5 from P113 while maintaining the interaction of the PfRH5 adhesion complex with BSG. Post-translationally, proteolytically cleaved into two chains of 125kDa and 65kDa which remain associated. The cleavage occurs at the schizont stage prior to the release of merozoites. Contains disulfide bonds.

Its subcellular location is the secreted. It is found in the cytoplasmic vesicle. The protein localises to the secretory vesicle. It localises to the microneme lumen. The protein resides in the cell membrane. Its subcellular location is the host cell membrane. In terms of biological role, essential for the invasion of host erythrocytes by blood stage merozoites. As part of the PfRH5 adhesion complex, facilitates the interaction of RH5 and human BSG required for the Ca(2+) release into the erythrocyte. The sequence is that of Rh5-interacting protein (RIPR) from Plasmodium falciparum (isolate 3D7).